The chain runs to 718 residues: Quinolinate synthase, chloroplastic (718 aa).

Residues 1–22 (MALALSVAPTSSSLSSLLSRTP) are compositionally biased toward low complexity. A disordered region spans residues 1-29 (MALALSVAPTSSSLSSLLSRTPNPSPNFR). Residues 1–70 (MALALSVAPT…VNASPFSISA (70 aa)) constitute a chloroplast transit peptide. Residue cysteine 132 is the Cysteine persulfide intermediate of the active site. Residues histidine 280 and serine 306 each coordinate iminosuccinate. Cysteine 360 serves as a coordination point for [4Fe-4S] cluster. Residues 389–391 (YIN) and serine 411 contribute to the iminosuccinate site. A [4Fe-4S] cluster-binding site is contributed by cysteine 484. Iminosuccinate is bound by residues 510–512 (HLE) and threonine 535. Cysteine 640 lines the [4Fe-4S] cluster pocket.

The protein belongs to the quinolinate synthase family. Type 1 subfamily. Homodimer. Interacts in vitro with NFS2, CpNIFS3 and AO. Part of a Cys defulfurase complex. [4Fe-4S] cluster serves as cofactor. As to expression, expressed in roots, leaves, stems and flowers.

It localises to the plastid. It is found in the chloroplast. The enzyme catalyses iminosuccinate + dihydroxyacetone phosphate = quinolinate + phosphate + 2 H2O + H(+). It functions in the pathway cofactor biosynthesis; NAD(+) biosynthesis; quinolinate from iminoaspartate: step 1/1. Functionally, catalyzes the condensation of iminoaspartate with dihydroxyacetone phosphate to form quinolinate. Can complement nadA-deficient E.coli mutant. Essential for the de novo synthesis of NAD. Also participates in cysteine desulfurization mediated by NFS2. Can activate the cysteine desulfurase activity of NFS2 in vitro. This is Quinolinate synthase, chloroplastic from Arabidopsis thaliana (Mouse-ear cress).